Consider the following 612-residue polypeptide: Dihydroxy-acid dehydratase (612 aa).

Aspartate 81 serves as a coordination point for Mg(2+). Residue cysteine 122 participates in [2Fe-2S] cluster binding. Mg(2+) contacts are provided by aspartate 123 and lysine 124. The residue at position 124 (lysine 124) is an N6-carboxylysine. Cysteine 193 provides a ligand contact to [2Fe-2S] cluster. Residue glutamate 489 participates in Mg(2+) binding. Serine 515 acts as the Proton acceptor in catalysis.

It belongs to the IlvD/Edd family. In terms of assembly, homodimer. Requires [2Fe-2S] cluster as cofactor. Mg(2+) is required as a cofactor.

The catalysed reaction is (2R)-2,3-dihydroxy-3-methylbutanoate = 3-methyl-2-oxobutanoate + H2O. The enzyme catalyses (2R,3R)-2,3-dihydroxy-3-methylpentanoate = (S)-3-methyl-2-oxopentanoate + H2O. The protein operates within amino-acid biosynthesis; L-isoleucine biosynthesis; L-isoleucine from 2-oxobutanoate: step 3/4. Its pathway is amino-acid biosynthesis; L-valine biosynthesis; L-valine from pyruvate: step 3/4. In terms of biological role, functions in the biosynthesis of branched-chain amino acids. Catalyzes the dehydration of (2R,3R)-2,3-dihydroxy-3-methylpentanoate (2,3-dihydroxy-3-methylvalerate) into 2-oxo-3-methylpentanoate (2-oxo-3-methylvalerate) and of (2R)-2,3-dihydroxy-3-methylbutanoate (2,3-dihydroxyisovalerate) into 2-oxo-3-methylbutanoate (2-oxoisovalerate), the penultimate precursor to L-isoleucine and L-valine, respectively. This chain is Dihydroxy-acid dehydratase, found in Stenotrophomonas maltophilia (strain R551-3).